A 159-amino-acid polypeptide reads, in one-letter code: Cytochrome c-type biogenesis protein CcmE (159 aa).

At 1-23 (MNNSSLENSASLKVILKQRKKKR) the chain is on the cytoplasmic side. A helical; Signal-anchor for type II membrane protein transmembrane segment spans residues 24-44 (LLIILLCCLVMAIAASLVVYA). Residues 45–159 (MRHAVSFFRM…RLKKHYSVEK (115 aa)) lie on the Periplasmic side of the membrane. Residues His-138 and Tyr-142 each coordinate heme.

It belongs to the CcmE/CycJ family.

The protein localises to the cell inner membrane. Functionally, heme chaperone required for the biogenesis of c-type cytochromes. Transiently binds heme delivered by CcmC and transfers the heme to apo-cytochromes in a process facilitated by CcmF and CcmH. The chain is Cytochrome c-type biogenesis protein CcmE from Bartonella tribocorum (strain CIP 105476 / IBS 506).